Consider the following 370-residue polypeptide: Phospho-N-acetylmuramoyl-pentapeptide-transferase (370 aa).

Helical transmembrane passes span 3 to 23 (QIII…PVLI), 54 to 74 (GLAI…YGLL), 79 to 99 (AFTA…AVGF), 118 to 138 (AKLI…LRFP), 161 to 181 (LAVG…YILI), 197 to 217 (LAAG…FWQF), 238 to 258 (LAVL…WNAA), 262 to 282 (IFMG…ISVT), 290 to 310 (IIIG…IVVF), and 341 to 361 (FWLL…GDWL).

The protein belongs to the glycosyltransferase 4 family. MraY subfamily. Mg(2+) is required as a cofactor.

It is found in the cell membrane. It catalyses the reaction UDP-N-acetyl-alpha-D-muramoyl-L-alanyl-gamma-D-glutamyl-meso-2,6-diaminopimeloyl-D-alanyl-D-alanine + di-trans,octa-cis-undecaprenyl phosphate = di-trans,octa-cis-undecaprenyl diphospho-N-acetyl-alpha-D-muramoyl-L-alanyl-D-glutamyl-meso-2,6-diaminopimeloyl-D-alanyl-D-alanine + UMP. It participates in cell wall biogenesis; peptidoglycan biosynthesis. Catalyzes the initial step of the lipid cycle reactions in the biosynthesis of the cell wall peptidoglycan: transfers peptidoglycan precursor phospho-MurNAc-pentapeptide from UDP-MurNAc-pentapeptide onto the lipid carrier undecaprenyl phosphate, yielding undecaprenyl-pyrophosphoryl-MurNAc-pentapeptide, known as lipid I. This chain is Phospho-N-acetylmuramoyl-pentapeptide-transferase, found in Corynebacterium aurimucosum (strain ATCC 700975 / DSM 44827 / CIP 107346 / CN-1) (Corynebacterium nigricans).